A 493-amino-acid chain; its full sequence is Galactose-1-phosphate uridylyltransferase (493 aa).

The protein belongs to the galactose-1-phosphate uridylyltransferase type 2 family.

The protein localises to the cytoplasm. The enzyme catalyses alpha-D-galactose 1-phosphate + UDP-alpha-D-glucose = alpha-D-glucose 1-phosphate + UDP-alpha-D-galactose. Its pathway is carbohydrate metabolism; galactose metabolism. This chain is Galactose-1-phosphate uridylyltransferase, found in Streptococcus salivarius.